The chain runs to 1221 residues: Probable serine/threonine-protein kinase DDB_G0286465 (1221 aa).

Disordered stretches follow at residues 1-37 (MTLRLDTSLKRGASRNIPPIPTFSSVSNENLSSSPYT), 104-133 (FSPSTGRTKNNNNNNNNNINNNNYKKNDNQ), and 173-263 (ENNS…NNNE). 4 stretches are compositionally biased toward low complexity: residues 24 to 37 (SSVSNENLSSSPYT), 112 to 127 (KNNNNNNNNNINNNNY), 173 to 192 (ENNSQNNNNNKYQINNNMQK), and 204 to 263 (NNNN…NNNE). The Protein kinase domain occupies 186–627 (INNNMQKTGG…PYKLLDHPFF (442 aa)). 192-200 (KTGGRNGSV) serves as a coordination point for ATP. ATP is bound at residue K271. Residues 324-344 (NVNNNNSNNNNNNSNNNITNS) show a composition bias toward low complexity. Residues 324–346 (NVNNNNSNNNNNNSNNNITNSRY) form a disordered region. The active-site Proton acceptor is the D448. Composition is skewed to low complexity over residues 538–550 (SPSSSSTTSTSTS) and 559–584 (DSSSSASSSSSSSSSSSSSSSSSLPK). Disordered regions lie at residues 538-604 (SPSS…PEKR), 712-782 (PNLS…KEKL), 823-858 (KFEKKQRQIQDSEKVNKNEEENQTKDDADNISPPLP), 959-1008 (KENI…SYCN), and 1105-1152 (KKQE…QQEK). Positions 591–604 (RSKDNQSKLDPEKR) are enriched in basic and acidic residues. Low complexity predominate over residues 725-738 (KKQLQQYQQQQKQQ). A compositionally biased stretch (acidic residues) spans 746-756 (DDEEEKEEEEK). 2 stretches are compositionally biased toward basic and acidic residues: residues 757–769 (EKEKEKEKEKEKE) and 823–850 (KFEKKQRQIQDSEKVNKNEEENQTKDDA). The span at 959-993 (KENIINFHNNNNNNNNNNNNNNNNNNNNNNNNNNN) shows a compositional bias: low complexity.

The protein belongs to the protein kinase superfamily. Ser/Thr protein kinase family.

The enzyme catalyses L-seryl-[protein] + ATP = O-phospho-L-seryl-[protein] + ADP + H(+). It carries out the reaction L-threonyl-[protein] + ATP = O-phospho-L-threonyl-[protein] + ADP + H(+). The protein is Probable serine/threonine-protein kinase DDB_G0286465 of Dictyostelium discoideum (Social amoeba).